The primary structure comprises 325 residues: Elongation factor Ts, mitochondrial (325 aa).

The N-terminal 45 residues, 1–45, are a transit peptide targeting the mitochondrion; the sequence is MSLLRSLRVFLVARTGSYPAGSLLRQSPQPRHTFYAGPRLSASAS. An N6-succinyllysine mark is found at Lys76, Lys133, and Lys192. The residue at position 270 (Ser270) is a Phosphoserine. Thr324 is subject to Phosphothreonine.

This sequence belongs to the EF-Ts family. Expressed in all tissues, with the highest levels of expression in skeletal muscle, liver and kidney.

Its subcellular location is the mitochondrion. Functionally, associates with the EF-Tu.GDP complex and induces the exchange of GDP to GTP. It remains bound to the aminoacyl-tRNA.EF-Tu.GTP complex up to the GTP hydrolysis stage on the ribosome. The polypeptide is Elongation factor Ts, mitochondrial (Homo sapiens (Human)).